The primary structure comprises 252 residues: Homeobox protein EMX2 (252 aa).

The homeobox DNA-binding region spans 154-213 (PKRIRTAFSPSQLLRLEHAFEKNHYVVGAERKQLAHSLSLTETQVKVWFQNRRTKFKRQK). Residues 212 to 252 (QKLEEEGSDSQQKKKGTHHINRWRIATKQASPEEIDVTSDD) are disordered. Positions 224–233 (KKKGTHHINR) are enriched in basic residues.

The protein belongs to the EMX homeobox family. In terms of assembly, interacts with translation initiation factor EIF4E. As to expression, cerebral cortex.

The protein localises to the nucleus. It localises to the cell projection. Its subcellular location is the axon. Transcription factor, which in cooperation with EMX1, acts to generate the boundary between the roof and archipallium in the developing brain. May function in combination with OTX1/2 to specify cell fates in the developing central nervous system. In the inner ear, it controls the distribution of GPR156 at hair cell boundaries, and regulates the organization of stereociliary bundles in opposite orientations across the line of polarity reversal (LPR). This is Homeobox protein EMX2 (EMX2) from Homo sapiens (Human).